The following is a 138-amino-acid chain: Single-stranded DNA-binding protein 4 (138 aa).

One can recognise an SSB domain in the interval 1 to 104; it reads MINNVVLIGR…VVADSFQILE (104 aa). Residues 107-138 are disordered; that stretch reads DNSTNQASMDDQLPPSFGNSQPMDISDDDLPF. Residues 133-138 carry the Important for interaction with partner proteins motif; the sequence is DDDLPF.

In terms of assembly, homotetramer.

Functionally, plays an important role in DNA replication, recombination and repair. Binds to ssDNA and to an array of partner proteins to recruit them to their sites of action during DNA metabolism. In Streptococcus agalactiae serotype V (strain ATCC BAA-611 / 2603 V/R), this protein is Single-stranded DNA-binding protein 4 (ssb4).